We begin with the raw amino-acid sequence, 137 residues long: MKHWFFLIILFFMNCSWGQDPFDKTQRNRSQFDNAQTVMEQTEIISSDVPNNLCGADENRQAAEIPLNALKLVGVVISKDKAFALLQDQGLQVYSVLEGVDVAQEGYIVEKINQNNVQFMRKLGEQCDSSEWKKLSF.

Involved in transformation (genetic competence for DNA uptake). In Haemophilus influenzae (strain ATCC 51907 / DSM 11121 / KW20 / Rd), this protein is Competence protein D (comD).